Consider the following 458-residue polypeptide: Bifunctional protein HldE (458 aa).

The interval 1-311 is ribokinase; it reads MVNVLVVGDL…ENLKSKKSGF (311 aa). 189–192 provides a ligand contact to ATP; it reads NKKE. The active site involves Asp-257. The interval 333-458 is cytidylyltransferase; it reads FTNGCFDILH…TTNIINKIKG (126 aa).

It in the N-terminal section; belongs to the carbohydrate kinase PfkB family. This sequence in the C-terminal section; belongs to the cytidylyltransferase family. Homodimer.

The enzyme catalyses D-glycero-beta-D-manno-heptose 7-phosphate + ATP = D-glycero-beta-D-manno-heptose 1,7-bisphosphate + ADP + H(+). It catalyses the reaction D-glycero-beta-D-manno-heptose 1-phosphate + ATP + H(+) = ADP-D-glycero-beta-D-manno-heptose + diphosphate. It participates in nucleotide-sugar biosynthesis; ADP-L-glycero-beta-D-manno-heptose biosynthesis; ADP-L-glycero-beta-D-manno-heptose from D-glycero-beta-D-manno-heptose 7-phosphate: step 1/4. Its pathway is nucleotide-sugar biosynthesis; ADP-L-glycero-beta-D-manno-heptose biosynthesis; ADP-L-glycero-beta-D-manno-heptose from D-glycero-beta-D-manno-heptose 7-phosphate: step 3/4. Its function is as follows. Catalyzes the phosphorylation of D-glycero-D-manno-heptose 7-phosphate at the C-1 position to selectively form D-glycero-beta-D-manno-heptose-1,7-bisphosphate. Functionally, catalyzes the ADP transfer from ATP to D-glycero-beta-D-manno-heptose 1-phosphate, yielding ADP-D-glycero-beta-D-manno-heptose. The protein is Bifunctional protein HldE of Campylobacter fetus subsp. fetus (strain 82-40).